The primary structure comprises 264 residues: 4-oxalocrotonate decarboxylase (264 aa).

Belongs to the hydratase/decarboxylase family.

It carries out the reaction (3E)-2-oxohex-3-enedioate + H(+) = 2-oxopent-4-enoate + CO2. The protein operates within xenobiotic degradation; toluene degradation. This is 4-oxalocrotonate decarboxylase (xylI) from Pseudomonas putida (Arthrobacter siderocapsulatus).